Consider the following 629-residue polypeptide: tRNA uridine 5-carboxymethylaminomethyl modification enzyme MnmG (629 aa).

FAD is bound by residues 14-19 (GAGHAG), Val126, and Ser181. 273 to 287 (GPRYCPSIEDKVVRF) contributes to the NAD(+) binding site. Gln370 serves as a coordination point for FAD.

This sequence belongs to the MnmG family. Homodimer. Heterotetramer of two MnmE and two MnmG subunits. Requires FAD as cofactor.

It is found in the cytoplasm. Its function is as follows. NAD-binding protein involved in the addition of a carboxymethylaminomethyl (cmnm) group at the wobble position (U34) of certain tRNAs, forming tRNA-cmnm(5)s(2)U34. The sequence is that of tRNA uridine 5-carboxymethylaminomethyl modification enzyme MnmG from Bacillus cereus (strain ATCC 10987 / NRS 248).